The following is a 263-amino-acid chain: Putative SNAP25 homologous protein SNAP30 (263 aa).

Disordered stretches follow at residues 1 to 61 (MFGF…LQSQ) and 132 to 209 (NLGG…DGLS). Polar residues-rich tracts occupy residues 8-34 (PGNN…TSSE) and 52-61 (FNDSGGLQSQ). Residues 158–173 (KPSKKSENHKEEREKL) show a composition bias toward basic and acidic residues. Over residues 180 to 194 (RSSSQPALDQPTNAL) the composition is skewed to polar residues. Residues 197 to 206 (VEQEKAKQDD) show a composition bias toward basic and acidic residues. The t-SNARE coiled-coil homology domain occupies 198–260 (EQEKAKQDDG…QGANQRARHL (63 aa)).

This sequence belongs to the SNAP-25 family.

Its subcellular location is the membrane. The protein localises to the cytoplasm. In terms of biological role, vesicle trafficking protein that functions in the secretory pathway. In Arabidopsis thaliana (Mouse-ear cress), this protein is Putative SNAP25 homologous protein SNAP30 (SNAP30).